The following is a 500-amino-acid chain: Tektin-like protein 1 (500 aa).

Positions M198–S229 form a coiled coil. Y372 bears the Phosphotyrosine mark. Positions D420–T444 form a coiled coil.

Microtubule inner protein component of sperm flagellar doublet microtubules.

Its subcellular location is the cytoplasm. The protein resides in the cytoskeleton. The protein localises to the flagellum axoneme. Functionally, microtubule inner protein (MIP) part of the dynein-decorated doublet microtubules (DMTs) in sperm flagellar axoneme, which is required for motile flagellum beating. Forms an extensive interaction network cross-linking the lumen of axonemal doublet microtubules. This chain is Tektin-like protein 1, found in Bos taurus (Bovine).